The primary structure comprises 237 residues: 7-cyano-7-deazaguanine synthase (237 aa).

9–19 (YSGGLDSTTCL) is an ATP binding site. Residues Cys-189, Cys-199, Cys-202, and Cys-205 each contribute to the Zn(2+) site.

This sequence belongs to the QueC family. Zn(2+) is required as a cofactor.

It carries out the reaction 7-carboxy-7-deazaguanine + NH4(+) + ATP = 7-cyano-7-deazaguanine + ADP + phosphate + H2O + H(+). It participates in purine metabolism; 7-cyano-7-deazaguanine biosynthesis. Functionally, catalyzes the ATP-dependent conversion of 7-carboxy-7-deazaguanine (CDG) to 7-cyano-7-deazaguanine (preQ(0)). The sequence is that of 7-cyano-7-deazaguanine synthase from Geobacter sulfurreducens (strain ATCC 51573 / DSM 12127 / PCA).